The sequence spans 117 residues: Large ribosomal subunit protein bL19 (117 aa).

It belongs to the bacterial ribosomal protein bL19 family.

In terms of biological role, this protein is located at the 30S-50S ribosomal subunit interface and may play a role in the structure and function of the aminoacyl-tRNA binding site. This chain is Large ribosomal subunit protein bL19, found in Desulfotalea psychrophila (strain LSv54 / DSM 12343).